We begin with the raw amino-acid sequence, 239 residues long: Ribonuclease PH (239 aa).

Residues R86 and 124 to 126 (GTR) each bind phosphate.

This sequence belongs to the RNase PH family. As to quaternary structure, homohexameric ring arranged as a trimer of dimers.

It catalyses the reaction tRNA(n+1) + phosphate = tRNA(n) + a ribonucleoside 5'-diphosphate. Phosphorolytic 3'-5' exoribonuclease that plays an important role in tRNA 3'-end maturation. Removes nucleotide residues following the 3'-CCA terminus of tRNAs; can also add nucleotides to the ends of RNA molecules by using nucleoside diphosphates as substrates, but this may not be physiologically important. Probably plays a role in initiation of 16S rRNA degradation (leading to ribosome degradation) during starvation. The protein is Ribonuclease PH of Sodalis glossinidius (strain morsitans).